A 271-amino-acid polypeptide reads, in one-letter code: Undecaprenyl-diphosphatase (271 aa).

The next 8 helical transmembrane spans lie at 2–22, 42–62, 80–100, 108–128, 149–168, 175–195, 214–234, and 248–268; these read LLIL…FVPV, ANLF…VVYW, LRFW…GFSL, LFNP…MIIV, SIFV…SRSA, WIAG…AIPV, IEFI…LVVI, and IFAI…IFKI.

This sequence belongs to the UppP family.

The protein localises to the cell membrane. The catalysed reaction is di-trans,octa-cis-undecaprenyl diphosphate + H2O = di-trans,octa-cis-undecaprenyl phosphate + phosphate + H(+). In terms of biological role, catalyzes the dephosphorylation of undecaprenyl diphosphate (UPP). Confers resistance to bacitracin. The protein is Undecaprenyl-diphosphatase of Clostridium tetani (strain Massachusetts / E88).